Here is a 27-residue protein sequence, read N- to C-terminus: Caerulein precursor fragment R2 (27 aa).

Expressed by the skin glands.

Its subcellular location is the secreted. In terms of biological role, antimicrobial peptide. The protein is Caerulein precursor fragment R2 of Xenopus ruwenzoriensis (Uganda clawed frog).